A 244-amino-acid chain; its full sequence is tRNA pseudouridine synthase A (244 aa).

Residue Asp52 is the Nucleophile of the active site. Residue Tyr110 coordinates substrate.

Belongs to the tRNA pseudouridine synthase TruA family. As to quaternary structure, homodimer.

It catalyses the reaction uridine(38/39/40) in tRNA = pseudouridine(38/39/40) in tRNA. Functionally, formation of pseudouridine at positions 38, 39 and 40 in the anticodon stem and loop of transfer RNAs. The sequence is that of tRNA pseudouridine synthase A from Geotalea uraniireducens (strain Rf4) (Geobacter uraniireducens).